The following is a 585-amino-acid chain: A-type ATP synthase subunit A (585 aa).

235 to 242 (GPFGSGKT) serves as a coordination point for ATP.

It belongs to the ATPase alpha/beta chains family. As to quaternary structure, has multiple subunits with at least A(3), B(3), C, D, E, F, H, I and proteolipid K(x).

Its subcellular location is the cell membrane. The catalysed reaction is ATP + H2O + 4 H(+)(in) = ADP + phosphate + 5 H(+)(out). Functionally, component of the A-type ATP synthase that produces ATP from ADP in the presence of a proton gradient across the membrane. The A chain is the catalytic subunit. The protein is A-type ATP synthase subunit A of Halobacterium salinarum (strain ATCC 29341 / DSM 671 / R1).